Here is a 420-residue protein sequence, read N- to C-terminus: Anaerobic glycerol-3-phosphate dehydrogenase subunit B (420 aa).

It belongs to the anaerobic G-3-P dehydrogenase subunit B family. As to quaternary structure, composed of a catalytic GlpA/B dimer and of membrane bound GlpC. It depends on FMN as a cofactor.

It carries out the reaction a quinone + sn-glycerol 3-phosphate = dihydroxyacetone phosphate + a quinol. The protein operates within polyol metabolism; glycerol degradation via glycerol kinase pathway; glycerone phosphate from sn-glycerol 3-phosphate (anaerobic route): step 1/1. Its function is as follows. Conversion of glycerol 3-phosphate to dihydroxyacetone. Uses fumarate or nitrate as electron acceptor. This chain is Anaerobic glycerol-3-phosphate dehydrogenase subunit B, found in Pectobacterium carotovorum subsp. carotovorum (strain PC1).